We begin with the raw amino-acid sequence, 209 residues long: Thymidine kinase (209 aa).

ATP-binding positions include 9–16 and 88–91; these read SAMNAGKT and DEAQ. Glu-89 acts as the Proton acceptor in catalysis.

The protein belongs to the thymidine kinase family. Homotetramer.

Its subcellular location is the cytoplasm. The enzyme catalyses thymidine + ATP = dTMP + ADP + H(+). The sequence is that of Thymidine kinase from Xanthomonas oryzae pv. oryzae (strain MAFF 311018).